An 87-amino-acid polypeptide reads, in one-letter code: Small ribosomal subunit protein bS18 (87 aa).

Basic and acidic residues predominate over residues 1–10 (MAGKSSGDRR). Residues 1–23 (MAGKSSGDRRKLLRGAKVGKNAA) form a disordered region.

It belongs to the bacterial ribosomal protein bS18 family. Part of the 30S ribosomal subunit. Forms a tight heterodimer with protein bS6.

Its function is as follows. Binds as a heterodimer with protein bS6 to the central domain of the 16S rRNA, where it helps stabilize the platform of the 30S subunit. In Clavibacter sepedonicus (Clavibacter michiganensis subsp. sepedonicus), this protein is Small ribosomal subunit protein bS18.